A 212-amino-acid polypeptide reads, in one-letter code: Pyridoxine/pyridoxamine 5'-phosphate oxidase (212 aa).

Substrate is bound by residues 8-11 (RRTY) and K66. FMN-binding positions include 61–66 (RIVLLK), 76–77 (FT), R82, K83, and Q105. Residues Y123, R127, and S131 each coordinate substrate. Residues 140–141 (QS) and W184 each bind FMN. 190–192 (RLH) serves as a coordination point for substrate. Position 194 (R194) interacts with FMN.

This sequence belongs to the pyridoxamine 5'-phosphate oxidase family. In terms of assembly, homodimer. FMN serves as cofactor.

It carries out the reaction pyridoxamine 5'-phosphate + O2 + H2O = pyridoxal 5'-phosphate + H2O2 + NH4(+). The enzyme catalyses pyridoxine 5'-phosphate + O2 = pyridoxal 5'-phosphate + H2O2. It participates in cofactor metabolism; pyridoxal 5'-phosphate salvage; pyridoxal 5'-phosphate from pyridoxamine 5'-phosphate: step 1/1. The protein operates within cofactor metabolism; pyridoxal 5'-phosphate salvage; pyridoxal 5'-phosphate from pyridoxine 5'-phosphate: step 1/1. Its function is as follows. Catalyzes the oxidation of either pyridoxine 5'-phosphate (PNP) or pyridoxamine 5'-phosphate (PMP) into pyridoxal 5'-phosphate (PLP). The protein is Pyridoxine/pyridoxamine 5'-phosphate oxidase of Cupriavidus pinatubonensis (strain JMP 134 / LMG 1197) (Cupriavidus necator (strain JMP 134)).